Consider the following 126-residue polypeptide: Histone H2B 1.1 (126 aa).

Positions 1-12 (MPEPAKSAPAPK) are enriched in low complexity. A disordered region spans residues 1–35 (MPEPAKSAPAPKKGSKKAVTKTQKKDGKKRRKSRK). N6-acetyllysine occurs at positions 6 and 13. Serine 15 is modified (phosphoserine). Lysine 16 and lysine 21 each carry N6-acetyllysine. O-linked (GlcNAc) serine glycosylation is present at serine 113. Lysine 121 is covalently cross-linked (Glycyl lysine isopeptide (Lys-Gly) (interchain with G-Cter in ubiquitin)).

It belongs to the histone H2B family. In terms of assembly, the nucleosome is a histone octamer containing two molecules each of H2A, H2B, H3 and H4 assembled in one H3-H4 heterotetramer and two H2A-H2B heterodimers. The octamer wraps approximately 147 bp of DNA. In terms of processing, monoubiquitination of Lys-121 by BRE1 gives a specific tag for epigenetic transcriptional activation and is also prerequisite for histone H3 'Lys-4' and 'Lys-79' methylation. Post-translationally, phosphorylated on Ser-15 during developmentally programmed apoptosis; which may facilitate apoptotic chromatin condensation. GlcNAcylation at Ser-113 promotes monoubiquitination of Lys-121. It fluctuates in response to extracellular glucose, and associates with transcribed genes.

It localises to the nucleus. The protein localises to the chromosome. In terms of biological role, core component of nucleosome. Nucleosomes wrap and compact DNA into chromatin, limiting DNA accessibility to the cellular machineries which require DNA as a template. Histones thereby play a central role in transcription regulation, DNA repair, DNA replication and chromosomal stability. DNA accessibility is regulated via a complex set of post-translational modifications of histones, also called histone code, and nucleosome remodeling. The sequence is that of Histone H2B 1.1 from Xenopus laevis (African clawed frog).